A 280-amino-acid chain; its full sequence is Aquaporin PIP2-7 (280 aa).

N-acetylmethionine is present on methionine 1. Residues 1 to 38 (MSKEVSEEGKTHHGKDYVDPPPAPLLDMGELKSWSFYR) are Cytoplasmic-facing. Lysine 3 bears the N6,N6-dimethyllysine mark. The chain crosses the membrane as a helical span at residues 39–59 (ALIAEFIATLLFLYVTVATVI). Residues 60-69 (GHKKQTGPCD) are Extracellular-facing. Residues 70 to 90 (GVGLLGIAWAFGGMIFVLVYC) form a helical membrane-spanning segment. Over 91 to 118 (TAGISGGHINPAVTFGLFLARKVSLVRA) the chain is Cytoplasmic. Residues 100–102 (NPA) carry the NPA 1 motif. Residues 119–139 (LGYMIAQCLGAICGVGFVKAF) traverse the membrane as a helical segment. Over 140 to 160 (MKTPYNTLGGGANTVADGYSK) the chain is Extracellular. Residues 161–181 (GTALGAEIIGTFVLVYTVFSA) traverse the membrane as a helical segment. The Cytoplasmic portion of the chain corresponds to 182 to 192 (TDPKRSARDSH). Residues 193–213 (IPVLAPLPIGFAVFMVHLATI) form a helical membrane-spanning segment. At 214–242 (PITGTGINPARSFGAAVIYNNEKAWDDQW) the chain is on the extracellular side. The short motif at 221 to 223 (NPA) is the NPA 2 element. A helical transmembrane segment spans residues 243–263 (IFWVGPFLGALAAAAYHQYIL). Topologically, residues 264 to 280 (RASAIKALGSFRSNATN) are cytoplasmic. Phosphoserine is present on residues serine 273 and serine 276. Threonine 279 is modified (phosphothreonine).

This sequence belongs to the MIP/aquaporin (TC 1.A.8) family. PIP (TC 1.A.8.11) subfamily. As to quaternary structure, interacts with SYP61 and SYP121 in trafficking vesicles and at the plasma membrane. As to expression, highly expressed in flowers, expressed at low levels in siliques, and at low level in leaves and roots. Highly levels in elongating cells in both roots and shoots.

The protein localises to the cell membrane. In terms of biological role, water channel required to facilitate the transport of water across cell membrane. May be involved in the osmoregulation in plants under high osmotic stress such as under a high salt condition. This chain is Aquaporin PIP2-7, found in Arabidopsis thaliana (Mouse-ear cress).